The sequence spans 422 residues: UDP-N-acetylglucosamine 1-carboxyvinyltransferase (422 aa).

22 to 23 (KN) lines the phosphoenolpyruvate pocket. R92 lines the UDP-N-acetyl-alpha-D-glucosamine pocket. The active-site Proton donor is the C116. Position 116 is a 2-(S-cysteinyl)pyruvic acid O-phosphothioketal (C116). The UDP-N-acetyl-alpha-D-glucosamine site is built by D306 and I328.

It belongs to the EPSP synthase family. MurA subfamily.

The protein resides in the cytoplasm. It carries out the reaction phosphoenolpyruvate + UDP-N-acetyl-alpha-D-glucosamine = UDP-N-acetyl-3-O-(1-carboxyvinyl)-alpha-D-glucosamine + phosphate. It functions in the pathway cell wall biogenesis; peptidoglycan biosynthesis. Cell wall formation. Adds enolpyruvyl to UDP-N-acetylglucosamine. This is UDP-N-acetylglucosamine 1-carboxyvinyltransferase from Elusimicrobium minutum (strain Pei191).